Reading from the N-terminus, the 363-residue chain is 3-isopropylmalate dehydrogenase (363 aa).

Position 78–91 (Gly78–Glu91) interacts with NAD(+). Residues Arg99, Arg109, Arg138, and Asp227 each coordinate substrate. Mg(2+) is bound by residues Asp227, Asp251, and Asp255. Gly285 to Asn297 is a binding site for NAD(+).

It belongs to the isocitrate and isopropylmalate dehydrogenases family. LeuB type 1 subfamily. Homodimer. Mg(2+) serves as cofactor. Requires Mn(2+) as cofactor.

The protein resides in the cytoplasm. The catalysed reaction is (2R,3S)-3-isopropylmalate + NAD(+) = 4-methyl-2-oxopentanoate + CO2 + NADH. It functions in the pathway amino-acid biosynthesis; L-leucine biosynthesis; L-leucine from 3-methyl-2-oxobutanoate: step 3/4. Catalyzes the oxidation of 3-carboxy-2-hydroxy-4-methylpentanoate (3-isopropylmalate) to 3-carboxy-4-methyl-2-oxopentanoate. The product decarboxylates to 4-methyl-2 oxopentanoate. This chain is 3-isopropylmalate dehydrogenase, found in Salmonella typhi.